The primary structure comprises 205 residues: SREBP regulating gene protein (205 aa).

Residues 1 to 16 (MVNLAAMVWRRLLRKR) are Cytoplasmic-facing. A helical transmembrane segment spans residues 17–35 (WVLALVFGLSLVYFLTSTF). The Lumenal portion of the chain corresponds to 36 to 205 (KQEERAVRDR…GESPPELFPA (170 aa)). Residue Asn-67 is glycosylated (N-linked (GlcNAc...) asparagine).

This sequence belongs to the SPRING family. As to quaternary structure, interacts with SCAP.

The protein resides in the golgi apparatus membrane. Its function is as follows. Positively regulates hepatic SREBP signaling pathway by modulating the proper localization of SCAP (SREBP cleavage-activating protein) to the endoplasmic reticulum, thereby controlling the level of functional SCAP. This Bos taurus (Bovine) protein is SREBP regulating gene protein.